Here is a 188-residue protein sequence, read N- to C-terminus: Elongation factor P-like protein (188 aa).

Belongs to the elongation factor P family.

This chain is Elongation factor P-like protein, found in Xanthomonas campestris pv. campestris (strain 8004).